The sequence spans 454 residues: tRNA modification GTPase MnmE (454 aa).

Arginine 26, glutamate 84, and lysine 123 together coordinate (6S)-5-formyl-5,6,7,8-tetrahydrofolate. The 160-residue stretch at 219–378 folds into the TrmE-type G domain; that stretch reads GLQVVIAGKP…LVDAITAHAG (160 aa). Asparagine 229 provides a ligand contact to K(+). GTP is bound by residues 229–234, 248–254, and 273–276; these read NAGKSS, TDIAGTT, and DTAG. Mg(2+) is bound at residue serine 233. 3 residues coordinate K(+): threonine 248, isoleucine 250, and threonine 253. Mg(2+) is bound at residue threonine 254. Lysine 454 serves as a coordination point for (6S)-5-formyl-5,6,7,8-tetrahydrofolate.

Belongs to the TRAFAC class TrmE-Era-EngA-EngB-Septin-like GTPase superfamily. TrmE GTPase family. In terms of assembly, homodimer. Heterotetramer of two MnmE and two MnmG subunits. The cofactor is K(+).

The protein resides in the cytoplasm. Its function is as follows. Exhibits a very high intrinsic GTPase hydrolysis rate. Involved in the addition of a carboxymethylaminomethyl (cmnm) group at the wobble position (U34) of certain tRNAs, forming tRNA-cmnm(5)s(2)U34. The sequence is that of tRNA modification GTPase MnmE from Acinetobacter baumannii (strain ATCC 17978 / DSM 105126 / CIP 53.77 / LMG 1025 / NCDC KC755 / 5377).